Reading from the N-terminus, the 261-residue chain is Pantothenate synthetase (261 aa).

Met-29–His-36 lines the ATP pocket. The Proton donor role is filled by His-36. Gln-60 contacts (R)-pantoate. Gln-60 serves as a coordination point for beta-alanine. An ATP-binding site is contributed by Gly-147–Asp-150. Residue Gln-153 participates in (R)-pantoate binding. Leu-184 to Arg-187 provides a ligand contact to ATP.

The protein belongs to the pantothenate synthetase family. In terms of assembly, homodimer.

The protein localises to the cytoplasm. It carries out the reaction (R)-pantoate + beta-alanine + ATP = (R)-pantothenate + AMP + diphosphate + H(+). The protein operates within cofactor biosynthesis; (R)-pantothenate biosynthesis; (R)-pantothenate from (R)-pantoate and beta-alanine: step 1/1. Its function is as follows. Catalyzes the condensation of pantoate with beta-alanine in an ATP-dependent reaction via a pantoyl-adenylate intermediate. This Francisella tularensis subsp. novicida (strain U112) protein is Pantothenate synthetase.